A 140-amino-acid polypeptide reads, in one-letter code: Short-chain diamines transporter (140 aa).

Transmembrane regions (helical) follow at residues 7–27, 36–56, 79–99, and 105–125; these read IFHA…AAAL, LALV…IYNL, VGFE…FLEI, and LMLE…FNWL.

It belongs to the proteobacterial antimicrobial compound efflux (PACE) (TC 2.A.117) family.

The protein localises to the cell inner membrane. Its function is as follows. Mediates the efflux of short-chain diamines when energized by an electrochemical gradient. Confers resistance to chlorhexidine, benzalkonium, proflavine and acriflavine. Mediates efflux of both proflavine and acriflavine via an energy-dependent mechanism. The protein is Short-chain diamines transporter of Vibrio parahaemolyticus serotype O3:K6 (strain RIMD 2210633).